We begin with the raw amino-acid sequence, 331 residues long: Ketol-acid reductoisomerase (NADP(+)) (331 aa).

A KARI N-terminal Rossmann domain is found at 2 to 182 (AKLFYDSDAD…GGTRAGILET (181 aa)). NADP(+) contacts are provided by residues 25 to 28 (YGSQ), Ser51, Ser53, and 83 to 86 (DEFQ). Residue His108 is part of the active site. Gly134 provides a ligand contact to NADP(+). One can recognise a KARI C-terminal knotted domain in the interval 183 to 328 (NFKEETETDL…KTLRSMFSWL (146 aa)). Residues Asp191, Glu195, Glu227, and Glu231 each coordinate Mg(2+). Residue Ser252 participates in substrate binding.

The protein belongs to the ketol-acid reductoisomerase family. Mg(2+) is required as a cofactor.

The enzyme catalyses (2R)-2,3-dihydroxy-3-methylbutanoate + NADP(+) = (2S)-2-acetolactate + NADPH + H(+). It carries out the reaction (2R,3R)-2,3-dihydroxy-3-methylpentanoate + NADP(+) = (S)-2-ethyl-2-hydroxy-3-oxobutanoate + NADPH + H(+). It functions in the pathway amino-acid biosynthesis; L-isoleucine biosynthesis; L-isoleucine from 2-oxobutanoate: step 2/4. It participates in amino-acid biosynthesis; L-valine biosynthesis; L-valine from pyruvate: step 2/4. Its function is as follows. Involved in the biosynthesis of branched-chain amino acids (BCAA). Catalyzes an alkyl-migration followed by a ketol-acid reduction of (S)-2-acetolactate (S2AL) to yield (R)-2,3-dihydroxy-isovalerate. In the isomerase reaction, S2AL is rearranged via a Mg-dependent methyl migration to produce 3-hydroxy-3-methyl-2-ketobutyrate (HMKB). In the reductase reaction, this 2-ketoacid undergoes a metal-dependent reduction by NADPH to yield (R)-2,3-dihydroxy-isovalerate. The protein is Ketol-acid reductoisomerase (NADP(+)) of Prochlorococcus marinus (strain NATL1A).